The following is a 251-amino-acid chain: Low molecular mass lipoprotein PBMHPC-21 (251 aa).

The first 16 residues, 1–16 (MKFVVVFASCVLAVSA), serve as a signal peptide directing secretion.

This sequence belongs to the 30 kDa lipoprotein family.

The protein localises to the secreted. The chain is Low molecular mass lipoprotein PBMHPC-21 from Bombyx mori (Silk moth).